Reading from the N-terminus, the 294-residue chain is uncharacterized protein (294 aa).

Positions 13–151 (QCSQIRPYLY…LIDLEQKLRG (139 aa)) constitute a Tyrosine-protein phosphatase domain. Residue Cys-95 is the Phosphocysteine intermediate of the active site. Residues 234-294 (PTLLVPSSSS…WRLSFHKDVV (61 aa)) are disordered.

Belongs to the protein-tyrosine phosphatase family. Non-receptor class dual specificity subfamily.

This is an uncharacterized protein from Caenorhabditis elegans.